The chain runs to 177 residues: UPF0114 protein HPAG1_0183 (177 aa).

4 helical membrane-spanning segments follow: residues 15–35 (WLLA…GYVF), 54–74 (LVLS…VLMV), 102–122 (FNAL…IFLL), and 145–165 (PIFW…LAAV).

The protein belongs to the UPF0114 family.

The protein resides in the cell membrane. The sequence is that of UPF0114 protein HPAG1_0183 from Helicobacter pylori (strain HPAG1).